A 1370-amino-acid polypeptide reads, in one-letter code: DNA-directed RNA polymerase subunit beta (1370 aa).

Belongs to the RNA polymerase beta chain family. In terms of assembly, the RNAP catalytic core consists of 2 alpha, 1 beta, 1 beta' and 1 omega subunit. When a sigma factor is associated with the core the holoenzyme is formed, which can initiate transcription.

The catalysed reaction is RNA(n) + a ribonucleoside 5'-triphosphate = RNA(n+1) + diphosphate. DNA-dependent RNA polymerase catalyzes the transcription of DNA into RNA using the four ribonucleoside triphosphates as substrates. The polypeptide is DNA-directed RNA polymerase subunit beta (Delftia acidovorans (strain DSM 14801 / SPH-1)).